The following is a 182-amino-acid chain: Keratin, high-sulfur matrix protein, B2D (182 aa).

A run of 6 repeats spans residues 27–36 (PTCCQTSCCQ), 37–46 (PTSIQTSCCQ), 47–56 (PTSIQTSCCQ), 57–66 (PTSIQTSCCQ), 67–76 (PISIQTSCCQ), and 77–86 (PTCLQTSGCE). The segment at 27–86 (PTCCQTSCCQPTSIQTSCCQPTSIQTSCCQPTSIQTSCCQPISIQTSCCQPTCLQTSGCE) is 6 X 10 AA tandem repeats.

The keratin products of mammalian epidermal derivatives such as wool and hair consist of microfibrils embedded in a rigid matrix of other proteins. The matrix proteins include the high-sulfur and high-tyrosine keratins, having molecular weights of 6-20 kDa, whereas the microfibrils contain the larger, low-sulfur keratins (40-56 kDa). This Ovis aries (Sheep) protein is Keratin, high-sulfur matrix protein, B2D.